The following is a 1039-amino-acid chain: Probable inorganic carbon transporter subunit DabA 2 (1039 aa).

Zn(2+) is bound by residues C462, D464, H721, and C736.

It belongs to the inorganic carbon transporter (TC 9.A.2) DabA family. As to quaternary structure, forms a complex with DabB. The cofactor is Zn(2+).

It is found in the cell inner membrane. In terms of biological role, part of an energy-coupled inorganic carbon pump. This chain is Probable inorganic carbon transporter subunit DabA 2, found in Nitrobacter hamburgensis (strain DSM 10229 / NCIMB 13809 / X14).